A 214-amino-acid chain; its full sequence is Pyrrolidone-carboxylate peptidase (214 aa).

Active-site residues include Glu80, Cys143, and His166.

The protein belongs to the peptidase C15 family. Homotetramer.

It is found in the cytoplasm. The catalysed reaction is Release of an N-terminal pyroglutamyl group from a polypeptide, the second amino acid generally not being Pro.. In terms of biological role, removes 5-oxoproline from various penultimate amino acid residues except L-proline. The protein is Pyrrolidone-carboxylate peptidase of Enterobacter sp. (strain 638).